The primary structure comprises 388 residues: Chaperone protein DnaJ (388 aa).

The region spanning D5–G69 is the J domain. The segment at G145–K227 adopts a CR-type zinc-finger fold. Residues C158, C161, C175, C178, C201, C204, C215, and C218 each coordinate Zn(2+). 4 CXXCXGXG motif repeats span residues C158–G165, C175–G182, C201–G208, and C215–G222.

This sequence belongs to the DnaJ family. As to quaternary structure, homodimer. Zn(2+) is required as a cofactor.

The protein resides in the cytoplasm. Participates actively in the response to hyperosmotic and heat shock by preventing the aggregation of stress-denatured proteins and by disaggregating proteins, also in an autonomous, DnaK-independent fashion. Unfolded proteins bind initially to DnaJ; upon interaction with the DnaJ-bound protein, DnaK hydrolyzes its bound ATP, resulting in the formation of a stable complex. GrpE releases ADP from DnaK; ATP binding to DnaK triggers the release of the substrate protein, thus completing the reaction cycle. Several rounds of ATP-dependent interactions between DnaJ, DnaK and GrpE are required for fully efficient folding. Also involved, together with DnaK and GrpE, in the DNA replication of plasmids through activation of initiation proteins. This chain is Chaperone protein DnaJ, found in Lactobacillus johnsonii (strain CNCM I-12250 / La1 / NCC 533).